Consider the following 389-residue polypeptide: Probable tRNA sulfurtransferase (389 aa).

In terms of domain architecture, THUMP spans 57–165 (DEALDRLSKI…EDETYIYHRV (109 aa)). ATP contacts are provided by residues 183–184 (LL), Lys-267, Gly-289, and Gln-298.

The protein belongs to the ThiI family.

The protein resides in the cytoplasm. The catalysed reaction is [ThiI sulfur-carrier protein]-S-sulfanyl-L-cysteine + a uridine in tRNA + 2 reduced [2Fe-2S]-[ferredoxin] + ATP + H(+) = [ThiI sulfur-carrier protein]-L-cysteine + a 4-thiouridine in tRNA + 2 oxidized [2Fe-2S]-[ferredoxin] + AMP + diphosphate. It carries out the reaction [ThiS sulfur-carrier protein]-C-terminal Gly-Gly-AMP + S-sulfanyl-L-cysteinyl-[cysteine desulfurase] + AH2 = [ThiS sulfur-carrier protein]-C-terminal-Gly-aminoethanethioate + L-cysteinyl-[cysteine desulfurase] + A + AMP + 2 H(+). The protein operates within cofactor biosynthesis; thiamine diphosphate biosynthesis. Its function is as follows. Catalyzes the ATP-dependent transfer of a sulfur to tRNA to produce 4-thiouridine in position 8 of tRNAs, which functions as a near-UV photosensor. Also catalyzes the transfer of sulfur to the sulfur carrier protein ThiS, forming ThiS-thiocarboxylate. This is a step in the synthesis of thiazole, in the thiamine biosynthesis pathway. The sulfur is donated as persulfide by IscS. The polypeptide is Probable tRNA sulfurtransferase (Methanothermobacter thermautotrophicus (strain ATCC 29096 / DSM 1053 / JCM 10044 / NBRC 100330 / Delta H) (Methanobacterium thermoautotrophicum)).